The primary structure comprises 245 residues: Probable 2-phosphosulfolactate phosphatase (245 aa).

The protein belongs to the ComB family. Mg(2+) is required as a cofactor.

It catalyses the reaction (2R)-O-phospho-3-sulfolactate + H2O = (2R)-3-sulfolactate + phosphate. The protein is Probable 2-phosphosulfolactate phosphatase of Nostoc sp. (strain PCC 7120 / SAG 25.82 / UTEX 2576).